The chain runs to 451 residues: MDCYTKYLAENVLSEDKVVTYRYLSRALRVHVNTAKQMLFEFHRSQNAKCPNTVHATYLVYGRKKADAEQPSALKNGDGDIEMTSSPPEAESISEAVPAYSLSLIPEDRLSDALADYDEVFSIHVYSIGPHPNKDVALLADAANATLNLESKGDVTQLRAIINPRARRREQQGAGLRAAAAAATVKSQAKSIFPKPPTAPSTSQVKEAPKASQTVEETAEKATLSAPAKKGSSAPKSAASSGGIMQAFSKAAAVSKAKKQTPALRSATPASVEESIPQPLSDDGEDDEDMPQPKPSRSSAMKTKKQREEELRRMMESDDEEEKKKKKEEEEEEEEEEEESEHEQLPAEEEPMAEEPKAPEPVKEEPAEIITATTNGRRRGKRKVLRKKQIMDEQGYLVTVTEPAWESFSEDEPPPPSKPKATSLAPATQATKPKKGGKGGQGSIMSWFAKK.

Disordered regions lie at residues 187 to 241 (SQAK…AASS), 259 to 386 (KQTP…KVLR), and 404 to 451 (AWES…FAKK). A compositionally biased stretch (polar residues) spans 200-216 (PSTSQVKEAPKASQTVE). Positions 225 to 241 (SAPAKKGSSAPKSAASS) are enriched in low complexity. Over residues 306–316 (QREEELRRMME) the composition is skewed to basic and acidic residues. Positions 329–353 (EEEEEEEEEEESEHEQLPAEEEPMA) are enriched in acidic residues. A compositionally biased stretch (basic and acidic residues) spans 354–366 (EEPKAPEPVKEEP). Residues 376-386 (GRRRGKRKVLR) are compositionally biased toward basic residues. The short motif at 441–448 (QGSIMSWF) is the PIP-box element.

In terms of assembly, component of the DNA polymerase delta complex which consists of PolD1, PolD2, PolD3 and PolD4, with PolD1 bearing DNA polymerase and 3' to 5' proofreading exonuclease activities. Directly interacts with PCNA.

Its subcellular location is the nucleus. In terms of biological role, accessory component of the DNA polymerase delta complex. The complex is required for the maintenance of genome integrity, acting in concert with the sliding clamp processivity factor PCNA. The polypeptide is DNA polymerase delta subunit 3 (Chaetomium thermophilum (strain DSM 1495 / CBS 144.50 / IMI 039719) (Thermochaetoides thermophila)).